The primary structure comprises 206 residues: RNA pyrophosphohydrolase (206 aa).

Residues 6-150 (GYRPNVGIVI…KRDVYRKVMK (145 aa)) enclose the Nudix hydrolase domain. Residues 38 to 59 (GGINEGENIETAMYRELYEEVG) carry the Nudix box motif. Over residues 162 to 191 (KPETVEKPRVERTEKRDFQKRDNQKREFRK) the composition is skewed to basic and acidic residues. The interval 162-206 (KPETVEKPRVERTEKRDFQKRDNQKREFRKSARMWNNSHQKGKAQ) is disordered.

The protein belongs to the Nudix hydrolase family. RppH subfamily. The cofactor is a divalent metal cation.

Functionally, accelerates the degradation of transcripts by removing pyrophosphate from the 5'-end of triphosphorylated RNA, leading to a more labile monophosphorylated state that can stimulate subsequent ribonuclease cleavage. This Actinobacillus pleuropneumoniae serotype 5b (strain L20) protein is RNA pyrophosphohydrolase.